Here is a 229-residue protein sequence, read N- to C-terminus: tRNA (guanine-N(7)-)-methyltransferase (229 aa).

S-adenosyl-L-methionine is bound by residues Glu62, Glu87, Asp114, and Asp137. Asp137 is a catalytic residue. Residue Lys141 participates in substrate binding. The tract at residues Lys143–Arg148 is interaction with RNA. Residues Asp173 and Thr208–Glu211 each bind substrate.

Belongs to the class I-like SAM-binding methyltransferase superfamily. TrmB family.

It carries out the reaction guanosine(46) in tRNA + S-adenosyl-L-methionine = N(7)-methylguanosine(46) in tRNA + S-adenosyl-L-homocysteine. Its pathway is tRNA modification; N(7)-methylguanine-tRNA biosynthesis. In terms of biological role, catalyzes the formation of N(7)-methylguanine at position 46 (m7G46) in tRNA. The chain is tRNA (guanine-N(7)-)-methyltransferase from Francisella philomiragia subsp. philomiragia (strain ATCC 25017 / CCUG 19701 / FSC 153 / O#319-036).